An 881-amino-acid polypeptide reads, in one-letter code: Translation initiation factor IF-2 (881 aa).

Disordered regions lie at residues 31 to 147 (KLAQ…TKVP) and 165 to 291 (SVVG…HYDE). The span at 42-55 (NSSEKPSAKVAEKV) shows a compositional bias: basic and acidic residues. Residues 68–77 (ATPESVSSET) are compositionally biased toward polar residues. Over residues 114-128 (VEEEIASSTDSEPEV) the composition is skewed to acidic residues. A compositionally biased stretch (basic and acidic residues) spans 191 to 203 (PKKEDKPAPKERS). Over residues 204 to 233 (GQAQAKPQQSSEASSENKPHSPNNNRSSQP) the composition is skewed to polar residues. The span at 235–267 (YRRDTSKKPGSDFRDRAKKDDNPKAFTGRDRYG) shows a compositional bias: basic and acidic residues. Positions 278–287 (RKKRVQKTKK) are enriched in basic residues. Residues 387–556 (IRPPIVAFMG…ALQAEVLELK (170 aa)) form the tr-type G domain. A G1 region spans residues 396-403 (GHVDHGKT). Position 396–403 (396–403 (GHVDHGKT)) interacts with GTP. Residues 421 to 425 (AITQH) are G2. The G3 stretch occupies residues 442–445 (DTPG). GTP-binding positions include 442 to 446 (DTPGH) and 496 to 499 (NKCD). A G4 region spans residues 496-499 (NKCD). The tract at residues 532-534 (SAK) is G5.

The protein belongs to the TRAFAC class translation factor GTPase superfamily. Classic translation factor GTPase family. IF-2 subfamily.

The protein resides in the cytoplasm. Its function is as follows. One of the essential components for the initiation of protein synthesis. Protects formylmethionyl-tRNA from spontaneous hydrolysis and promotes its binding to the 30S ribosomal subunits. Also involved in the hydrolysis of GTP during the formation of the 70S ribosomal complex. This Chlamydia felis (strain Fe/C-56) (Chlamydophila felis) protein is Translation initiation factor IF-2.